The following is a 667-amino-acid chain: Zeaxanthin epoxidase, chloroplastic (667 aa).

The transit peptide at 1 to 59 directs the protein to the chloroplast; the sequence is MGSTPFCYSINPSPSKLDFTRTHVFSPVSKQFYLDLSSFSGKPGGVSGFRSRRALLGVK. FAD contacts are provided by residues 82–110 and 360–373; these read RVLV…LVFE and GFTW…LLGD. The 55-residue stretch at 558 to 612 folds into the FHA domain; the sequence is CIVGSEPDQDFPGMRIVIPSSQVSKMHARVIYKDGAFFLMDLRSEHGTYVTDNEG.

FAD is required as a cofactor. As to expression, expressed in leaves, stems and flowers, and at lower levels in roots and siliques.

The protein resides in the plastid. It is found in the chloroplast. The catalysed reaction is all-trans-zeaxanthin + 4 reduced [2Fe-2S]-[ferredoxin] + 2 O2 + 4 H(+) = all-trans-violaxanthin + 4 oxidized [2Fe-2S]-[ferredoxin] + 2 H2O. Its pathway is plant hormone biosynthesis; abscisate biosynthesis. Its function is as follows. Zeaxanthin epoxidase that plays an important role in the xanthophyll cycle and abscisic acid (ABA) biosynthesis. Converts zeaxanthin into antheraxanthin and subsequently violaxanthin. Required for resistance to osmotic and drought stresses, ABA-dependent stomatal closure, seed development and dormancy, modulation of defense gene expression and disease resistance and non-photochemical quencing (NPQ). Through its role in ABA biosynthesis, regulates the expression of stress-responsive genes such as RD29A during osmotic stress and is required for normal plant growth during vegetative development. Is required for late skotomorphogenic growth through its role in the xanthophyll carotenoids neoxanthin, violaxanthin and antheraxanthin biosynthesis. Required for beta-aminobutyric acid (BABA)-induced priming in disease resistance, tolerance to salt and drought stresses and sterility. Participates in NPQ by regulating the level of zeaxanthin in photosynthetic energy conversion. NPQ is a process that maintains the balance between dissipation and utilization of light energy to minimize the generation of oxidizing molecules and the molecular damages they can generate. This is Zeaxanthin epoxidase, chloroplastic (ZEP) from Arabidopsis thaliana (Mouse-ear cress).